The chain runs to 195 residues: Interferon tau (195 aa).

The N-terminal stretch at 1–23 is a signal peptide; that stretch reads MAFVLSLRMALVLVSYCPGGSLG. 2 disulfides stabilise this stretch: C24-C122 and C52-C162. A glycan (N-linked (GlcNAc...) asparagine) is linked at N101.

The protein belongs to the alpha/beta interferon family. IFN-alphaII subfamily. Constitutively and exclusively expressed in the mononuclear cells of the extraembryonic trophectoderm.

The protein localises to the secreted. In terms of biological role, paracrine hormone primarily responsible for maternal recognition of pregnancy. Interacts with endometrial receptors, probably type I interferon receptors, and blocks estrogen receptor expression, preventing the estrogen-induced increase in oxytocin receptor expression in the endometrium. This results in the suppression of the pulsatile endometrial release of the luteolytic hormone prostaglandin F2-alpha, hindering the regression of the corpus luteum (luteolysis) and therefore a return to ovarian cyclicity. This, and a possible direct effect of IFN-tau on prostaglandin synthesis, leads in turn to continued ovarian progesterone secretion, which stimulates the secretion by the endometrium of the nutrients required for the growth of the conceptus. In summary, displays particularly high antiviral and antiproliferative potency concurrently with particular weak cytotoxicity, high antiluteolytic activity and immunomodulatory properties. In contrast with other IFNs, IFN-tau is not virally inducible. This is Interferon tau (IFNT) from Ovibos moschatus (Muskox).